A 535-amino-acid chain; its full sequence is Beta-amylase (535 aa).

Substrate-binding residues include D51, H91, and D99. E184 acts as the Proton donor in catalysis. 3 residues coordinate substrate: K293, H298, and T340. The Proton acceptor role is filled by E378. Substrate-binding positions include 379–380 and R418; that span reads NA. A run of 3 repeats spans residues 489 to 499, 500 to 510, and 511 to 521. The interval 489 to 532 is 4 X 11 AA tandem repeats; sequence GPTGGMGGQAEGPTCGMGGQVKGPTGGMGGQAEDPTSGIGGELP. The tract at residues 513 to 535 is disordered; that stretch reads TGGMGGQAEDPTSGIGGELPATM. Residues 522 to 532 form a 4; approximate repeat; sequence DPTSGIGGELP.

This sequence belongs to the glycosyl hydrolase 14 family. In terms of assembly, monomer.

It carries out the reaction Hydrolysis of (1-&gt;4)-alpha-D-glucosidic linkages in polysaccharides so as to remove successive maltose units from the non-reducing ends of the chains.. This is Beta-amylase (BMY1) from Hordeum vulgare (Barley).